A 394-amino-acid chain; its full sequence is Phosphoglycerate kinase (394 aa).

Residues 21-23 (DFN), Arg36, 59-62 (HLGR), Arg118, and Arg151 contribute to the substrate site. Phosphoserine is present on Ser183. Position 201 (Lys201) interacts with ATP. Thr299 carries the phosphothreonine modification. ATP contacts are provided by residues Asn316, Glu323, and 350 to 353 (GGDS).

This sequence belongs to the phosphoglycerate kinase family. Monomer.

The protein resides in the cytoplasm. It carries out the reaction (2R)-3-phosphoglycerate + ATP = (2R)-3-phospho-glyceroyl phosphate + ADP. The protein operates within carbohydrate degradation; glycolysis; pyruvate from D-glyceraldehyde 3-phosphate: step 2/5. This chain is Phosphoglycerate kinase, found in Geobacillus stearothermophilus (Bacillus stearothermophilus).